The chain runs to 328 residues: PDZ and LIM domain protein 1 (328 aa).

Thr2 carries the post-translational modification N-acetylthreonine. Residues 3 to 85 (TLQIVLQGPG…NMTLTVARSE (83 aa)) form the PDZ domain. 2 positions are modified to phosphoserine: Ser90 and Ser130. Tyr144 carries the post-translational modification Phosphotyrosine. Residues 257–316 (PMCDKCGTGIVGVFVKLRERHRHPECYVCTDCGTNLKQKGHFFVEDQIYCEKHARERVTP) form the LIM zinc-binding domain. Zn(2+) is bound by residues Cys259, Cys262, His279, Cys282, Cys285, Cys288, Cys306, and His309. Phosphothreonine is present on Thr315. At Tyr320 the chain carries Phosphotyrosine.

As to quaternary structure, interacts with ACTN1, ACTN2 and ACTN4. Interacts with PDLIM4.

It localises to the cytoplasm. The protein resides in the cytoskeleton. Its subcellular location is the myofibril. It is found in the sarcomere. The protein localises to the z line. In terms of biological role, cytoskeletal protein that may act as an adapter that brings other proteins (like kinases) to the cytoskeleton. Involved in assembly, disassembly and directioning of stress fibers in fibroblasts. Required for the localization of ACTN1 and PALLD to stress fibers. Required for cell migration and in maintaining cell polarity of fibroblasts. The sequence is that of PDZ and LIM domain protein 1 (PDLIM1) from Bos taurus (Bovine).